The sequence spans 388 residues: Putative nickel insertion protein (388 aa).

This sequence belongs to the LarC family.

The chain is Putative nickel insertion protein from Syntrophobacter fumaroxidans (strain DSM 10017 / MPOB).